Reading from the N-terminus, the 900-residue chain is Isoleucine--tRNA ligase (900 aa).

The 'HIGH' region motif lies at 58–68; the sequence is PYANGDLHTGH. Glu-550 contacts L-isoleucyl-5'-AMP. A 'KMSKS' region motif is present at residues 591–595; it reads KMSKS. Lys-594 provides a ligand contact to ATP. Zn(2+) is bound by residues Cys-871, Cys-874, Cys-888, and Cys-891.

The protein belongs to the class-I aminoacyl-tRNA synthetase family. IleS type 1 subfamily. Monomer. Zn(2+) serves as cofactor.

It is found in the cytoplasm. It carries out the reaction tRNA(Ile) + L-isoleucine + ATP = L-isoleucyl-tRNA(Ile) + AMP + diphosphate. Catalyzes the attachment of isoleucine to tRNA(Ile). As IleRS can inadvertently accommodate and process structurally similar amino acids such as valine, to avoid such errors it has two additional distinct tRNA(Ile)-dependent editing activities. One activity is designated as 'pretransfer' editing and involves the hydrolysis of activated Val-AMP. The other activity is designated 'posttransfer' editing and involves deacylation of mischarged Val-tRNA(Ile). In Malacoplasma penetrans (strain HF-2) (Mycoplasma penetrans), this protein is Isoleucine--tRNA ligase.